The sequence spans 453 residues: Kynureninase (453 aa).

Pyridoxal 5'-phosphate is bound by residues L114, T115, 142–145, D232, H235, and Y257; that span reads FPSD. Residue K258 is modified to N6-(pyridoxal phosphate)lysine. Residue W286 participates in pyridoxal 5'-phosphate binding.

The protein belongs to the kynureninase family. As to quaternary structure, homodimer. It depends on pyridoxal 5'-phosphate as a cofactor.

The protein resides in the cytoplasm. The catalysed reaction is L-kynurenine + H2O = anthranilate + L-alanine + H(+). The enzyme catalyses 3-hydroxy-L-kynurenine + H2O = 3-hydroxyanthranilate + L-alanine + H(+). It functions in the pathway amino-acid degradation; L-kynurenine degradation; L-alanine and anthranilate from L-kynurenine: step 1/1. It participates in cofactor biosynthesis; NAD(+) biosynthesis; quinolinate from L-kynurenine: step 2/3. Catalyzes the cleavage of L-kynurenine (L-Kyn) and L-3-hydroxykynurenine (L-3OHKyn) into anthranilic acid (AA) and 3-hydroxyanthranilic acid (3-OHAA), respectively. This is Kynureninase from Cryptococcus neoformans var. neoformans serotype D (strain JEC21 / ATCC MYA-565) (Filobasidiella neoformans).